The following is a 310-amino-acid chain: Malate dehydrogenase (310 aa).

Residues 7-12 and Asp-32 contribute to the NAD(+) site; that span reads GAGNVG. Substrate-binding residues include Arg-81 and Arg-87. NAD(+)-binding positions include Asn-94 and 117 to 119; that span reads VSN. Positions 119 and 150 each coordinate substrate. Residue His-174 is the Proton acceptor of the active site.

Belongs to the LDH/MDH superfamily. MDH type 3 family.

The catalysed reaction is (S)-malate + NAD(+) = oxaloacetate + NADH + H(+). Catalyzes the reversible oxidation of malate to oxaloacetate. In Chlorobium limicola (strain DSM 245 / NBRC 103803 / 6330), this protein is Malate dehydrogenase.